We begin with the raw amino-acid sequence, 498 residues long: Glycerol kinase (498 aa).

Residue Thr-11 coordinates ADP. 3 residues coordinate ATP: Thr-11, Ser-12, and Ser-13. Thr-11 lines the sn-glycerol 3-phosphate pocket. Arg-15 provides a ligand contact to ADP. Arg-81, Glu-82, Tyr-133, and Asp-242 together coordinate sn-glycerol 3-phosphate. Residues Arg-81, Glu-82, Tyr-133, Asp-242, and Gln-243 each contribute to the glycerol site. ADP is bound by residues Thr-264 and Gly-307. Residues Thr-264, Gly-307, Gln-311, and Gly-408 each coordinate ATP. Positions 408 and 412 each coordinate ADP.

This sequence belongs to the FGGY kinase family.

It carries out the reaction glycerol + ATP = sn-glycerol 3-phosphate + ADP + H(+). It functions in the pathway polyol metabolism; glycerol degradation via glycerol kinase pathway; sn-glycerol 3-phosphate from glycerol: step 1/1. Its activity is regulated as follows. Inhibited by fructose 1,6-bisphosphate (FBP). Key enzyme in the regulation of glycerol uptake and metabolism. Catalyzes the phosphorylation of glycerol to yield sn-glycerol 3-phosphate. In Ralstonia nicotianae (strain ATCC BAA-1114 / GMI1000) (Ralstonia solanacearum), this protein is Glycerol kinase.